Consider the following 368-residue polypeptide: tRNA(Met) cytidine acetate ligase (368 aa).

ATP-binding positions include 7–20 (IAEF…HKYL), Gly96, Asn152, and Arg175.

Belongs to the TmcAL family.

Its subcellular location is the cytoplasm. It carries out the reaction cytidine(34) in elongator tRNA(Met) + acetate + ATP = N(4)-acetylcytidine(34) in elongator tRNA(Met) + AMP + diphosphate. Its function is as follows. Catalyzes the formation of N(4)-acetylcytidine (ac(4)C) at the wobble position of elongator tRNA(Met), using acetate and ATP as substrates. First activates an acetate ion to form acetyladenylate (Ac-AMP) and then transfers the acetyl group to tRNA to form ac(4)C34. This chain is tRNA(Met) cytidine acetate ligase, found in Streptococcus pyogenes serotype M49 (strain NZ131).